We begin with the raw amino-acid sequence, 367 residues long: MTVMKFDLIKKEGKARRGKISFPRGDIQTPAFMPVGTYGAVKSLSPVELKEMGAEIILGNTFHLWLRPGTEIIKKHGSLHGFNGWDKPILTDSGGFQVFSLGKMRKLTEEGVTFKSPINGSKVFLSPEISMQVQRDLGSDIVMCFDECTPYPATEKEAKESMELSMRWAKRSKDAHGDNPSALFGIIQGGMYEHLRDESLAKLKEIDFDGFAIGGLSVGEPKEDMIRILDHTAHQMPEDKPRYLMGVGTPKDLVEAVYRGVDMFDCVMPSRNARNGHIFTSEGVIKIRNSKYKDDTSPLDPNCDCYTCKNFTKSYLHHLDKTKEILGSRLNTIHNLTFYQNLMKSIRKALDEGRFAEFRKEFLANYK.

The Proton acceptor role is filled by aspartate 92. Substrate is bound by residues 92–96 (DSGGF), aspartate 146, glutamine 188, and glycine 215. Positions 246-252 (GVGTPKD) are RNA binding. Aspartate 265 (nucleophile) is an active-site residue. The Zn(2+) site is built by cysteine 303, cysteine 305, cysteine 308, and histidine 334.

The protein belongs to the queuine tRNA-ribosyltransferase family. As to quaternary structure, homodimer. Within each dimer, one monomer is responsible for RNA recognition and catalysis, while the other monomer binds to the replacement base PreQ1. Zn(2+) serves as cofactor.

It carries out the reaction 7-aminomethyl-7-carbaguanine + guanosine(34) in tRNA = 7-aminomethyl-7-carbaguanosine(34) in tRNA + guanine. It functions in the pathway tRNA modification; tRNA-queuosine biosynthesis. Catalyzes the base-exchange of a guanine (G) residue with the queuine precursor 7-aminomethyl-7-deazaguanine (PreQ1) at position 34 (anticodon wobble position) in tRNAs with GU(N) anticodons (tRNA-Asp, -Asn, -His and -Tyr). Catalysis occurs through a double-displacement mechanism. The nucleophile active site attacks the C1' of nucleotide 34 to detach the guanine base from the RNA, forming a covalent enzyme-RNA intermediate. The proton acceptor active site deprotonates the incoming PreQ1, allowing a nucleophilic attack on the C1' of the ribose to form the product. After dissociation, two additional enzymatic reactions on the tRNA convert PreQ1 to queuine (Q), resulting in the hypermodified nucleoside queuosine (7-(((4,5-cis-dihydroxy-2-cyclopenten-1-yl)amino)methyl)-7-deazaguanosine). In Francisella tularensis subsp. novicida (strain U112), this protein is Queuine tRNA-ribosyltransferase.